Reading from the N-terminus, the 465-residue chain is Flavin-containing monooxygenase FMO GS-OX-like 2 (465 aa).

18 to 23 is a binding site for FAD; sequence GAGAAG. NADP(+) is bound at residue 217-222; sequence GSSASG.

This sequence belongs to the FMO family. Requires FAD as cofactor.

Functionally, catalyzes the conversion of methylthioalkyl glucosinolates of any chain length into methylsulfinylalkyl glucosinolates. The sequence is that of Flavin-containing monooxygenase FMO GS-OX-like 2 from Arabidopsis thaliana (Mouse-ear cress).